The sequence spans 2208 residues: RNA-directed RNA polymerase L (2208 aa).

The tract at residues 26-284 (KEALLSQVEV…SHAGTTVPEC (259 aa)) is endonuclease. Glu-51, Asp-89, and Glu-102 together coordinate Mn(2+). Residue Lys-115 is part of the active site. One can recognise a RdRp catalytic domain in the interval 1172–1370 (CDMKMAVNNG…FLSSKLNKFV (199 aa)). A Mg(2+)-binding site is contributed by Asp-1330.

This sequence belongs to the Bunyavirales RNA polymerase family. In terms of assembly, homomultimer; the oligomeric structure is essential for the polymerase activity. Interacts with nucleoprotein N. Interacts with protein Z; this interaction inhibits viral transcription and replication, Z partially blocks the product exit tunnel for the releasing nascent RNA product. It depends on Mn(2+) as a cofactor. The cofactor is Mg(2+).

Its subcellular location is the virion. The protein resides in the host cytoplasm. It catalyses the reaction RNA(n) + a ribonucleoside 5'-triphosphate = RNA(n+1) + diphosphate. RNA-dependent RNA polymerase, which is responsible for the replication and transcription of the viral RNA genome using antigenomic RNA as an intermediate. During transcription, synthesizes subgenomic RNAs and assures their capping by a cap-snatching mechanism, which involves the endonuclease activity cleaving the host capped pre-mRNAs. These short capped RNAs are then used as primers for viral transcription. The 3'-end of subgenomic mRNAs molecules are heterogeneous and not polyadenylated. The replicase function is to direct synthesis of antigenomic and genomic RNA which are encapsidated and non capped. As a consequence of the use of the same enzyme for both transcription and replication, these mechanisms need to be well coordinated. These processes may be regulated by proteins N and Z in a dose-dependent manner. Z protein inhibits the viral polymerase L und thus the viral transcription and RNA synthesis. This Hylaeamys megacephalus (Large-headed rice rat) protein is RNA-directed RNA polymerase L.